The sequence spans 446 residues: Ribosomal protein uS12 methylthiotransferase RimO (446 aa).

Residues 4-119 (LKVGLISLGC…LVENINNFIS (116 aa)) form the MTTase N-terminal domain. Residues C13, C48, C82, C157, C161, and C164 each coordinate [4Fe-4S] cluster. In terms of domain architecture, Radical SAM core spans 143-373 (TTKSHTAYLR…MMLQKHIIYS (231 aa)). The TRAM domain maps to 376 to 442 (KYKIGNKYKV…EYDLVGVVYD (67 aa)).

The protein belongs to the methylthiotransferase family. RimO subfamily. It depends on [4Fe-4S] cluster as a cofactor.

The protein resides in the cytoplasm. The enzyme catalyses L-aspartate(89)-[ribosomal protein uS12]-hydrogen + (sulfur carrier)-SH + AH2 + 2 S-adenosyl-L-methionine = 3-methylsulfanyl-L-aspartate(89)-[ribosomal protein uS12]-hydrogen + (sulfur carrier)-H + 5'-deoxyadenosine + L-methionine + A + S-adenosyl-L-homocysteine + 2 H(+). Catalyzes the methylthiolation of an aspartic acid residue of ribosomal protein uS12. The chain is Ribosomal protein uS12 methylthiotransferase RimO from Clostridium kluyveri (strain ATCC 8527 / DSM 555 / NBRC 12016 / NCIMB 10680 / K1).